The following is a 404-amino-acid chain: Probable tRNA sulfurtransferase (404 aa).

In terms of domain architecture, THUMP spans 60–165; that stretch reads TAVAESLKQV…EEAAYLSYET (106 aa). ATP contacts are provided by residues 183–184, 208–209, arginine 265, glycine 287, and glutamine 296; these read ML and HF.

The protein belongs to the ThiI family.

It is found in the cytoplasm. It carries out the reaction [ThiI sulfur-carrier protein]-S-sulfanyl-L-cysteine + a uridine in tRNA + 2 reduced [2Fe-2S]-[ferredoxin] + ATP + H(+) = [ThiI sulfur-carrier protein]-L-cysteine + a 4-thiouridine in tRNA + 2 oxidized [2Fe-2S]-[ferredoxin] + AMP + diphosphate. The catalysed reaction is [ThiS sulfur-carrier protein]-C-terminal Gly-Gly-AMP + S-sulfanyl-L-cysteinyl-[cysteine desulfurase] + AH2 = [ThiS sulfur-carrier protein]-C-terminal-Gly-aminoethanethioate + L-cysteinyl-[cysteine desulfurase] + A + AMP + 2 H(+). It functions in the pathway cofactor biosynthesis; thiamine diphosphate biosynthesis. Its function is as follows. Catalyzes the ATP-dependent transfer of a sulfur to tRNA to produce 4-thiouridine in position 8 of tRNAs, which functions as a near-UV photosensor. Also catalyzes the transfer of sulfur to the sulfur carrier protein ThiS, forming ThiS-thiocarboxylate. This is a step in the synthesis of thiazole, in the thiamine biosynthesis pathway. The sulfur is donated as persulfide by IscS. In Streptococcus pneumoniae (strain 70585), this protein is Probable tRNA sulfurtransferase.